The chain runs to 315 residues: Protein phosphatase PTC7 homolog fig (315 aa).

A PPM-type phosphatase domain is found at 54–309 (KHSIASAKDN…DDITVILATV (256 aa)). The Mn(2+) site is built by Asp86, Gly87, and Asp231.

Belongs to the PP2C family. It depends on Mg(2+) as a cofactor. Requires Mn(2+) as cofactor.

The enzyme catalyses O-phospho-L-seryl-[protein] + H2O = L-seryl-[protein] + phosphate. The catalysed reaction is O-phospho-L-threonyl-[protein] + H2O = L-threonyl-[protein] + phosphate. The protein is Protein phosphatase PTC7 homolog fig of Drosophila willistoni (Fruit fly).